The following is a 415-amino-acid chain: Serine hydroxymethyltransferase (415 aa).

(6S)-5,6,7,8-tetrahydrofolate-binding positions include leucine 117 and 121-123 (GHL). An N6-(pyridoxal phosphate)lysine modification is found at lysine 226. Glutamate 241 is a binding site for (6S)-5,6,7,8-tetrahydrofolate.

It belongs to the SHMT family. As to quaternary structure, homodimer. It depends on pyridoxal 5'-phosphate as a cofactor.

The protein resides in the cytoplasm. It catalyses the reaction (6R)-5,10-methylene-5,6,7,8-tetrahydrofolate + glycine + H2O = (6S)-5,6,7,8-tetrahydrofolate + L-serine. It functions in the pathway one-carbon metabolism; tetrahydrofolate interconversion. It participates in amino-acid biosynthesis; glycine biosynthesis; glycine from L-serine: step 1/1. Its function is as follows. Catalyzes the reversible interconversion of serine and glycine with tetrahydrofolate (THF) serving as the one-carbon carrier. This reaction serves as the major source of one-carbon groups required for the biosynthesis of purines, thymidylate, methionine, and other important biomolecules. Also exhibits THF-independent aldolase activity toward beta-hydroxyamino acids, producing glycine and aldehydes, via a retro-aldol mechanism. The chain is Serine hydroxymethyltransferase from Bacillus velezensis (strain DSM 23117 / BGSC 10A6 / LMG 26770 / FZB42) (Bacillus amyloliquefaciens subsp. plantarum).